The sequence spans 636 residues: Epsin-3 (636 aa).

6 residues coordinate a 1,2-diacyl-sn-glycero-3-phospho-(1D-myo-inositol-4,5-bisphosphate): arginine 8, lysine 11, arginine 25, asparagine 30, arginine 63, and histidine 73. The region spanning 12 to 144 (NIVHNYSEAE…KDEERLRQER (133 aa)) is the ENTH domain. The tract at residues 153 to 503 (RMALEGMGIG…TPESFLGPSA (351 aa)) is disordered. Over residues 174–189 (GSPSSYTSASSSPRYA) the composition is skewed to low complexity. 2 positions are modified to phosphoserine: serine 184 and serine 185. UIM domains follow at residues 202–221 (EEELQLQLALAMSREEAERP) and 229–248 (DEDLQLQLALSLSRQEHEKG). Composition is skewed to basic and acidic residues over residues 214–231 (SREEAERPVPPASHRDED) and 242–256 (RQEHEKGVRSWKGDD). Serine 257 carries the phosphoserine modification. The span at 270–288 (RQRDREPEREERKEEEKLK) shows a compositional bias: basic and acidic residues. A run of 5 repeats spans residues 315–317 (DPW), 338–340 (DPW), 365–367 (EPW), 381–383 (DPW), and 398–400 (DPW). The interval 315–400 (DPWDIPGLRP…KLPSTGADPW (86 aa)) is 5 X 3 AA repeats of [DE]-P-W. A compositionally biased stretch (basic and acidic residues) spans 426–435 (ESTEPKESRD). Tandem repeats lie at residues 523-525 (NPF) and 536-538 (NPF). A 3 X 3 AA repeats of N-P-F region spans residues 523-635 (NPFLTGLGVP…LPPQAGTNPF (113 aa)). A compositionally biased stretch (pro residues) spans 607–616 (PPPASLPQPL). The interval 607-636 (PPPASLPQPLLPTSGPMGPLPPQAGTNPFL) is disordered. Repeat unit 3 spans residues 633-635 (NPF).

The protein belongs to the epsin family.

It is found in the cytoplasm. The protein localises to the cell cortex. Its subcellular location is the perinuclear region. It localises to the cytoplasmic vesicle. The protein resides in the clathrin-coated vesicle. This chain is Epsin-3 (Epn3), found in Mus musculus (Mouse).